We begin with the raw amino-acid sequence, 329 residues long: Olfactory receptor 10J3 (329 aa).

The Extracellular segment spans residues 1–26 (MPKLNSTFVTEFLFEGFSSFRRQHKL). Residue Asn-5 is glycosylated (N-linked (GlcNAc...) asparagine). Residues 27 to 47 (VFFVVFLTLYLLTLSGNVIIM) form a helical membrane-spanning segment. At 48-55 (TIIRLDHH) the chain is on the cytoplasmic side. Residues 56–76 (LHTPMYFFLCMLSISETCYTV) form a helical membrane-spanning segment. The Extracellular segment spans residues 77-100 (AIIPHMLSGLLNPHQPIATQSCAT). Cysteines 98 and 190 form a disulfide. A helical membrane pass occupies residues 101–121 (QLFFYLTFGINNCFLLTVMGY). Over 122-140 (DRYVAICNPLRYSVIMGKR) the chain is Cytoplasmic. The helical transmembrane segment at 141–161 (ACIQLASGSLGIGLGMAIVQV) threads the bilayer. Residues 162–198 (TSVFGLPFCDAFVISHFFCDVRHLLKLACTDTTVNEI) are Extracellular-facing. The helical transmembrane segment at 199–218 (INFVVSVCVLVLPMGLVFIS) threads the bilayer. Residues 219–238 (YVLIISTILKIASAEGQKKA) are Cytoplasmic-facing. A helical transmembrane segment spans residues 239–259 (FATCASHLTVVIIHYGCASII). Residues 260–272 (YLKPKSQSSLGQD) lie on the Extracellular side of the membrane. A helical membrane pass occupies residues 273-293 (RLISVTYTHHSPTEPCCVQPE). Residues 294–329 (EQGGQRCSAQSRGAKNSVSLMKRGCEGFSFAFINMY) are Cytoplasmic-facing.

Belongs to the G-protein coupled receptor 1 family.

The protein resides in the cell membrane. Odorant receptor. In Homo sapiens (Human), this protein is Olfactory receptor 10J3 (OR10J3).